We begin with the raw amino-acid sequence, 322 residues long: tRNA (guanine-N(7)-)-methyltransferase (322 aa).

S-adenosyl-L-methionine contacts are provided by Glu29, Glu55, and Asp105. Residue Asp105 is part of the active site. Substrate-binding residues include Lys109 and Asp141.

Belongs to the class I-like SAM-binding methyltransferase superfamily. TrmB family.

It catalyses the reaction guanosine(46) in tRNA + S-adenosyl-L-methionine = N(7)-methylguanosine(46) in tRNA + S-adenosyl-L-homocysteine. Its pathway is tRNA modification; N(7)-methylguanine-tRNA biosynthesis. In terms of biological role, catalyzes the formation of N(7)-methylguanine at position 46 (m7G46) in tRNA. The chain is tRNA (guanine-N(7)-)-methyltransferase from Deinococcus radiodurans (strain ATCC 13939 / DSM 20539 / JCM 16871 / CCUG 27074 / LMG 4051 / NBRC 15346 / NCIMB 9279 / VKM B-1422 / R1).